A 181-amino-acid chain; its full sequence is MASSIVSSAAAATRSNVAQASMVAPFTGLKSAASFPVTKKNNNVDITSLASNGGRVRCMQVWPPINMKKYETLSYLPDLSDEQLLSEIEYLLKNGWVPCLEFETERGFVYRENNSSPGYYDGRYWTMWKLPMFGCTDATQVLAEVQEAKKAYPQAWVRIIGFDNVRQVQCISFIAYKPEGF.

The transit peptide at 1 to 57 directs the protein to the chloroplast; it reads MASSIVSSAAAATRSNVAQASMVAPFTGLKSAASFPVTKKNNNVDITSLASNGGRVR.

This sequence belongs to the RuBisCO small chain family. As to quaternary structure, (Microbial infection) Binds to tobamovirus movement protein; this interaction seems required for viral systemic movement. In terms of assembly, heterohexadecamer of 8 large and 8 small subunits.

Its subcellular location is the plastid. It is found in the chloroplast. The protein localises to the cell junction. The protein resides in the plasmodesma. Its function is as follows. RuBisCO catalyzes two reactions: the carboxylation of D-ribulose 1,5-bisphosphate, the primary event in carbon dioxide fixation, as well as the oxidative fragmentation of the pentose substrate. Both reactions occur simultaneously and in competition at the same active site. Although the small subunit is not catalytic it is essential for maximal activity. Involved in antiviral defenses. The sequence is that of Ribulose bisphosphate carboxylase small subunit, chloroplastic 1 from Solanum lycopersicum (Tomato).